Consider the following 588-residue polypeptide: Aspartate--tRNA ligase (588 aa).

Residue E172 participates in L-aspartate binding. The interval 196-199 is aspartate; the sequence is QLFK. R218 contributes to the L-aspartate binding site. ATP contacts are provided by residues 218 to 220 and Q227; that span reads RDE. H449 provides a ligand contact to L-aspartate. An ATP-binding site is contributed by E483. R490 is a binding site for L-aspartate. 535–538 is an ATP binding site; it reads GLDR.

The protein belongs to the class-II aminoacyl-tRNA synthetase family. Type 1 subfamily. In terms of assembly, homodimer.

The protein resides in the cytoplasm. The catalysed reaction is tRNA(Asp) + L-aspartate + ATP = L-aspartyl-tRNA(Asp) + AMP + diphosphate. Its function is as follows. Catalyzes the attachment of L-aspartate to tRNA(Asp) in a two-step reaction: L-aspartate is first activated by ATP to form Asp-AMP and then transferred to the acceptor end of tRNA(Asp). The polypeptide is Aspartate--tRNA ligase (Haemophilus influenzae (strain PittGG)).